The following is an 874-amino-acid chain: Ribosome biogenesis protein ERB1 (874 aa).

The segment at 1 to 148 (MAKKEVSASK…DAFAAADAAT (148 aa)) is disordered. Residues 27–41 (QAVEKEEAEKEKEEG) are compositionally biased toward basic and acidic residues. Acidic residues predominate over residues 55 to 77 (PESDSDDEGAAAAEEEEEEEEQQ). The span at 78-89 (QDVKELDLDKGE) shows a compositional bias: basic and acidic residues. Composition is skewed to acidic residues over residues 95-104 (SDAEDFDSEE) and 128-139 (PKEDGDEQDEQD). The required for interaction with NOP7 stretch occupies residues 312–429 (RFVPSKHEAK…LRLVPGYQDS (118 aa)). The tract at residues 429–465 (SVRERFERSLDLYLAPRLRKNKLNIDPESLIPELPSP) is required for interaction with YTM1. 2 WD repeats span residues 481–520 (GHTG…QVFK) and 529–569 (NGED…FEIE). The span at 593–602 (KVKGEDTKGD) shows a compositional bias: basic and acidic residues. The interval 593–640 (KVKGEDTKGDLDDDEEEEEEEEDDDDDEGQGKVKAHNSTAPAKKDVAK) is disordered. Over residues 603 to 620 (LDDDEEEEEEEEDDDDDE) the composition is skewed to acidic residues. WD repeat units follow at residues 658–700 (QCRR…SQSP), 703–741 (KSKG…LLKK), 744–783 (PGVR…TPYK), 787–827 (YHEK…DLMT), and 843–874 (INQI…LWTT).

This sequence belongs to the WD repeat BOP1/ERB1 family. Component of the NOP7 complex, composed of ERB1, NOP7 and YTM1. The complex is held together by ERB1, which interacts with NOP7 via its N-terminal domain and with YTM1 via a high-affinity interaction between the seven-bladed beta-propeller domains of the 2 proteins. The NOP7 complex associates with the 66S pre-ribosome.

Its subcellular location is the nucleus. The protein localises to the nucleolus. The protein resides in the nucleoplasm. Its function is as follows. Component of the NOP7 complex, which is required for maturation of the 25S and 5.8S ribosomal RNAs and formation of the 60S ribosome. The sequence is that of Ribosome biogenesis protein ERB1 from Lodderomyces elongisporus (strain ATCC 11503 / CBS 2605 / JCM 1781 / NBRC 1676 / NRRL YB-4239) (Yeast).